A 256-amino-acid polypeptide reads, in one-letter code: Vesicle-associated protein 1-1 (256 aa).

Met1 carries the N-acetylmethionine modification. At Met1–Gly232 the chain is on the cytoplasmic side. N-acetylserine; in Vesicle-associated protein 1-1, N-terminally processed is present on Ser2. The 121-residue stretch at Leu22–Val142 folds into the MSP domain. Positions Val142–Gly169 are disordered. Position 149 is a phosphoserine (Ser149). A compositionally biased stretch (polar residues) spans Glu157 to Gly169. A coiled-coil region spans residues His187–Gly232. Residues Gly233–Met253 traverse the membrane as a helical; Anchor for type IV membrane protein segment.

It belongs to the VAMP-associated protein (VAP) (TC 9.B.17) family. In terms of assembly, homodimer or homooligomer. Interacts with the cowpea mosaic virus (CPMV) NTP-binding protein (NTB). Interacts with NET3C.

It localises to the endoplasmic reticulum membrane. Its subcellular location is the protein storage vacuole membrane. Its function is as follows. Part of a membrane-cytoskeletal adapter complex that forms a bridge between the endoplasmic reticulum and the plasma membrane. Associates with microtubules. The polypeptide is Vesicle-associated protein 1-1 (PVA11) (Arabidopsis thaliana (Mouse-ear cress)).